Here is a 372-residue protein sequence, read N- to C-terminus: Bifunctional enzyme IspD/IspF (372 aa).

Residues 1–210 (MLDLSLIMLG…LNLNSPSNDI (210 aa)) are 2-C-methyl-D-erythritol 4-phosphate cytidylyltransferase. A 2-C-methyl-D-erythritol 2,4-cyclodiphosphate synthase region spans residues 211-372 (FCGNGFDVHA…LKYFNWRNVL (162 aa)). A divalent metal cation-binding residues include aspartate 217 and histidine 219. Residues 217–219 (DVH) and 243–244 (HS) each bind 4-CDP-2-C-methyl-D-erythritol 2-phosphate. Histidine 251 serves as a coordination point for a divalent metal cation. 4-CDP-2-C-methyl-D-erythritol 2-phosphate is bound by residues 265 to 267 (DIG), 270 to 274 (YPDND), 341 to 344 (TTTE), phenylalanine 348, and arginine 351.

It in the N-terminal section; belongs to the IspD/TarI cytidylyltransferase family. IspD subfamily. This sequence in the C-terminal section; belongs to the IspF family. A divalent metal cation is required as a cofactor.

The enzyme catalyses 2-C-methyl-D-erythritol 4-phosphate + CTP + H(+) = 4-CDP-2-C-methyl-D-erythritol + diphosphate. It carries out the reaction 4-CDP-2-C-methyl-D-erythritol 2-phosphate = 2-C-methyl-D-erythritol 2,4-cyclic diphosphate + CMP. The protein operates within isoprenoid biosynthesis; isopentenyl diphosphate biosynthesis via DXP pathway; isopentenyl diphosphate from 1-deoxy-D-xylulose 5-phosphate: step 2/6. It functions in the pathway isoprenoid biosynthesis; isopentenyl diphosphate biosynthesis via DXP pathway; isopentenyl diphosphate from 1-deoxy-D-xylulose 5-phosphate: step 4/6. Bifunctional enzyme that catalyzes the formation of 4-diphosphocytidyl-2-C-methyl-D-erythritol from CTP and 2-C-methyl-D-erythritol 4-phosphate (MEP) (IspD), and catalyzes the conversion of 4-diphosphocytidyl-2-C-methyl-D-erythritol 2-phosphate (CDP-ME2P) to 2-C-methyl-D-erythritol 2,4-cyclodiphosphate (ME-CPP) with a corresponding release of cytidine 5-monophosphate (CMP) (IspF). This Campylobacter fetus subsp. fetus (strain 82-40) protein is Bifunctional enzyme IspD/IspF.